A 528-amino-acid chain; its full sequence is Potassium voltage-gated channel subfamily A member 3 (528 aa).

The segment at Met-1 to Gly-32 is disordered. At Met-1–Arg-187 the chain is on the cytoplasmic side. The span at Ala-15–Gly-32 shows a compositional bias: gly residues. The helical transmembrane segment at Gly-188 to Leu-206 threads the bilayer. The Extracellular portion of the chain corresponds to Glu-207–Pro-247. A glycan (N-linked (GlcNAc...) asparagine) is linked at Asn-232. The chain crosses the membrane as a helical span at residues Phe-248–Ala-269. A lipid anchor (S-palmitoyl cysteine) is attached at Cys-270. Residues Cys-270–Ile-280 lie on the Cytoplasmic side of the membrane. A helical transmembrane segment spans residues Met-281–Ala-301. Residues Glu-302 to Ile-315 lie on the Extracellular side of the membrane. A helical; Voltage-sensor transmembrane segment spans residues Leu-316–Ser-334. At Lys-335–Glu-350 the chain is on the cytoplasmic side. A helical transmembrane segment spans residues Leu-351 to Tyr-370. Topologically, residues Phe-371–Lys-411 are extracellular. The Selectivity filter signature appears at Thr-397 to Asp-402. A helical transmembrane segment spans residues Ile-412–Ser-434. Over Asn-435–Val-528 the chain is Cytoplasmic. The interval Asn-435 to Val-528 is interaction with KCNE4. At Tyr-452 the chain carries Phosphotyrosine. At Ser-473 the chain carries Phosphoserine; by PKA. Residues Thr-526 to Val-528 carry the PDZ-binding motif.

It belongs to the potassium channel family. A (Shaker) (TC 1.A.1.2) subfamily. Kv1.3/KCNA3 sub-subfamily. Homotetramer. Forms heterooligomers with KCNE4 which inhibits KCNA3 activity by impairing localization to the cell membrane. The stoichiometry of KCNA3 and KCNE4 in the heterooligomers are 4:1, 4:2, 4:3 or 4:4 respectively. Increasing the number of KCNE4 subunits steadily slows the activation KCNA3 and decreases its abundance at the cell membrane. However, a single subunit of KCNE4 is sufficient for the cooperative enhancement of the inactivating function of the channel. Interacts with SEC24D; this interaction is reduced in the presence of KCNE4. Interacts with DLG1, DLG2 and DLG4 via their PDZ domains. Post-translationally, N-glycosylation promotes the cell surface expression. In terms of processing, phosphorylation on Tyr-452 inhibits its channel activity.

The protein localises to the cell membrane. It carries out the reaction K(+)(in) = K(+)(out). With respect to regulation, activity is up-regulated by JAK2. Mediates the voltage-dependent potassium ion permeability of excitable membranes. Assuming opened or closed conformations in response to the voltage difference across the membrane, the protein forms a potassium-selective channel through which potassium ions may pass in accordance with their electrochemical gradient. In Mus musculus (Mouse), this protein is Potassium voltage-gated channel subfamily A member 3 (Kcna3).